A 231-amino-acid chain; its full sequence is Acyl-protein thioesterase 2 (231 aa).

A lipid anchor (S-palmitoyl cysteine) is attached at cysteine 2. Serine 82 carries the post-translational modification Phosphoserine. Catalysis depends on charge relay system residues serine 122, aspartate 176, and histidine 210.

It belongs to the AB hydrolase superfamily. AB hydrolase 2 family. In terms of tissue distribution, ubiquitous; detected at low levels.

It localises to the cytoplasm. The catalysed reaction is S-hexadecanoyl-L-cysteinyl-[protein] + H2O = L-cysteinyl-[protein] + hexadecanoate + H(+). The enzyme catalyses prostaglandin E2 1-glyceryl ester + H2O = prostaglandin E2 + glycerol + H(+). It carries out the reaction 1-hexadecanoyl-sn-glycero-3-phosphocholine + H2O = sn-glycerol 3-phosphocholine + hexadecanoate + H(+). It catalyses the reaction 1-octadecanoyl-sn-glycero-3-phosphocholine + H2O = octadecanoate + sn-glycerol 3-phosphocholine + H(+). The catalysed reaction is 1-hexadecanoyl-sn-glycero-3-phosphate + H2O = sn-glycerol 3-phosphate + hexadecanoate + H(+). The enzyme catalyses 1-hexadecanoyl-sn-glycero-3-phospho-L-serine + H2O = sn-glycero-3-phospho-L-serine + hexadecanoate + H(+). Acts as an acyl-protein thioesterase hydrolyzing fatty acids from S-acylated cysteine residues in proteins such as trimeric G alpha proteins, GSDMD, GAP43, ZDHHC6 or HRAS. Deacylates GAP43. Mediates depalmitoylation of ZDHHC6. Has lysophospholipase activity. Hydrolyzes prostaglandin glycerol esters (PG-Gs). Hydrolyzes PG-Gs in the following order prostaglandin D2-glycerol ester (PGD2-G) &gt; prostaglandin E2 glycerol ester (PGE2-G) &gt; prostaglandin F2-alpha-glycerol ester (PGF2-alpha-G). Hydrolyzes 1-arachidonoylglycerol but not 2-arachidonoylglycerol or arachidonoylethanolamide. This chain is Acyl-protein thioesterase 2 (Lypla2), found in Mus musculus (Mouse).